Here is a 363-residue protein sequence, read N- to C-terminus: 3-dehydroquinate synthase (363 aa).

NAD(+)-binding positions include 72–77 (SGEKEK), 130–131 (TT), lysine 142, and lysine 151. Positions 184, 247, and 264 each coordinate Zn(2+).

Belongs to the sugar phosphate cyclases superfamily. Dehydroquinate synthase family. Co(2+) is required as a cofactor. It depends on Zn(2+) as a cofactor. Requires NAD(+) as cofactor.

Its subcellular location is the cytoplasm. The catalysed reaction is 7-phospho-2-dehydro-3-deoxy-D-arabino-heptonate = 3-dehydroquinate + phosphate. Its pathway is metabolic intermediate biosynthesis; chorismate biosynthesis; chorismate from D-erythrose 4-phosphate and phosphoenolpyruvate: step 2/7. Its function is as follows. Catalyzes the conversion of 3-deoxy-D-arabino-heptulosonate 7-phosphate (DAHP) to dehydroquinate (DHQ). This Bacillus anthracis (strain A0248) protein is 3-dehydroquinate synthase.